Consider the following 318-residue polypeptide: Peroxisomal and mitochondrial division factor 1 (318 aa).

Positions 1–39 (MADVEDRAAKGISDYDQGGVKTTELERKIEDMENKNQEL) are disordered. At 1-291 (MADVEDRAAK…QKGSLEAEYQ (291 aa)) the chain is on the cytoplasmic side. Residues 19 to 260 (GVKTTELERK…KKVEEGNKTV (242 aa)) adopt a coiled-coil conformation. The segment covering 23-39 (TELERKIEDMENKNQEL) has biased composition (basic and acidic residues). The chain crosses the membrane as a helical span at residues 292-312 (WPVVAAGSVGAAGLVAATFFV). Residues 313–318 (CYSKLR) are Mitochondrial intermembrane-facing.

As to quaternary structure, homodimer. Interacts with PMD2.

The protein localises to the peroxisome membrane. It localises to the mitochondrion outer membrane. Involved in morphogenesis and proliferation of peroxisomes and mitochondria, independently from the previously defined pathway controlled by the FIS1-DRP3 complex. In Arabidopsis thaliana (Mouse-ear cress), this protein is Peroxisomal and mitochondrial division factor 1.